We begin with the raw amino-acid sequence, 825 residues long: Translation initiation factor IF-2 (825 aa).

Basic and acidic residues-rich tracts occupy residues 1–19 (MTKKQENETSKELGMDNKK), 35–45 (RKGEKKTEGKR), 70–98 (LLKDLKQKQRADEARLDQESKAAKQEYKK), and 113–122 (KKVESVEKPA). Residues 1 to 239 (MTKKQENETS…TQRKDRPLPE (239 aa)) form a disordered region. A compositionally biased stretch (low complexity) spans 158–169 (PSSSRRPSSRPS). Over residues 181–191 (GRRRKSGKPGR) the composition is skewed to basic residues. Over residues 194–208 (QNSYADQGRGANSNR) the composition is skewed to polar residues. Basic residues predominate over residues 211–220 (QRKRKNKKHQ). Positions 326-495 (VRPPVVTIMG…ILEADMLELK (170 aa)) constitute a tr-type G domain. The tract at residues 335–342 (GHVDHGKT) is G1. 335-342 (GHVDHGKT) provides a ligand contact to GTP. The tract at residues 360–364 (GITQN) is G2. The segment at 381 to 384 (DTPG) is G3. Residues 381-385 (DTPGH) and 435-438 (NKMD) each bind GTP. A G4 region spans residues 435 to 438 (NKMD). The interval 471-473 (SAK) is G5.

The protein belongs to the TRAFAC class translation factor GTPase superfamily. Classic translation factor GTPase family. IF-2 subfamily.

Its subcellular location is the cytoplasm. Functionally, one of the essential components for the initiation of protein synthesis. Protects formylmethionyl-tRNA from spontaneous hydrolysis and promotes its binding to the 30S ribosomal subunits. Also involved in the hydrolysis of GTP during the formation of the 70S ribosomal complex. The polypeptide is Translation initiation factor IF-2 (Lactobacillus delbrueckii subsp. bulgaricus (strain ATCC BAA-365 / Lb-18)).